The sequence spans 99 residues: Small ribosomal subunit protein uS14m (99 aa).

This sequence belongs to the universal ribosomal protein uS14 family.

The protein localises to the mitochondrion. This is Small ribosomal subunit protein uS14m (RPS14) from Acanthamoeba castellanii (Amoeba).